The following is a 252-amino-acid chain: Adapter protein MecA (252 aa).

This sequence belongs to the MecA family. As to quaternary structure, homodimer.

In terms of biological role, enables the recognition and targeting of unfolded and aggregated proteins to the ClpC protease or to other proteins involved in proteolysis. This Streptococcus uberis (strain ATCC BAA-854 / 0140J) protein is Adapter protein MecA.